A 451-amino-acid chain; its full sequence is Probable plasmid replicative DNA helicase (451 aa).

The region spanning 194–451 (QNSFFDAFPT…SKFSAIKKVW (258 aa)) is the SF4 helicase domain. ATP is bound at residue 225–232 (ARPSIGKT).

This sequence belongs to the helicase family. DnaB subfamily. Homohexamer.

It catalyses the reaction Couples ATP hydrolysis with the unwinding of duplex DNA at the replication fork by translocating in the 5'-3' direction. This creates two antiparallel DNA single strands (ssDNA). The leading ssDNA polymer is the template for DNA polymerase III holoenzyme which synthesizes a continuous strand.. It carries out the reaction ATP + H2O = ADP + phosphate + H(+). Functionally, a replicative DNA helicase, it participates in initiation and elongation during DNA replication. Travels ahead of the DNA replisome, separating dsDNA into templates for DNA synthesis. A processive ATP-dependent 5'-3' DNA helicase it has DNA-dependent ATPase activity. Its function is as follows. The plasmid this protein is encoded on is thought to be required for growth within mammalian cells. This chain is Probable plasmid replicative DNA helicase, found in Chlamydia trachomatis serovar L2 (strain ATCC VR-902B / DSM 19102 / 434/Bu).